A 295-amino-acid chain; its full sequence is Protein SSO2 (295 aa).

At Met1 to Arg269 the chain is on the cytoplasmic side. 2 positions are modified to phosphoserine: Ser31 and Ser34. A coiled-coil region spans residues Ala39–Ala100. Residues Leu194–Ala256 enclose the t-SNARE coiled-coil homology domain. A helical; Anchor for type IV membrane protein transmembrane segment spans residues Cys270–Val291. The Extracellular portion of the chain corresponds to Glu292–Lys295.

It belongs to the syntaxin family.

It is found in the membrane. Functionally, required for vesicle fusion with the plasma membrane. This is Protein SSO2 (SSO2) from Saccharomyces cerevisiae (strain ATCC 204508 / S288c) (Baker's yeast).